The sequence spans 468 residues: Mitochondrial distribution and morphology protein 10 (468 aa).

Belongs to the MDM10 family. In terms of assembly, component of the ER-mitochondria encounter structure (ERMES) or MDM complex, composed of MMM1, MDM10, MDM12 and MDM34. Associates with the mitochondrial outer membrane sorting assembly machinery SAM(core) complex.

The protein localises to the mitochondrion outer membrane. Its function is as follows. Component of the ERMES/MDM complex, which serves as a molecular tether to connect the endoplasmic reticulum and mitochondria. Components of this complex are involved in the control of mitochondrial shape and protein biogenesis and may function in phospholipid exchange. MDM10 is involved in the late assembly steps of the general translocase of the mitochondrial outer membrane (TOM complex). Functions in the TOM40-specific route of the assembly of outer membrane beta-barrel proteins, including the association of TOM40 with the receptor TOM22 and small TOM proteins. Can associate with the SAM(core) complex as well as the MDM12-MMM1 complex, both involved in late steps of the major beta-barrel assembly pathway, that is responsible for biogenesis of all outer membrane beta-barrel proteins. May act as a switch that shuttles between both complexes and channels precursor proteins into the TOM40-specific pathway. Plays a role in mitochondrial morphology and in the inheritance of mitochondria. The sequence is that of Mitochondrial distribution and morphology protein 10 from Blastomyces gilchristii (strain SLH14081) (Blastomyces dermatitidis).